The primary structure comprises 597 residues: DNA primase (597 aa).

Residues cysteine 40, histidine 43, cysteine 61, and cysteine 64 each coordinate Zn(2+). A CHC2-type zinc finger spans residues 40–64 (CPFHGEKTPSFSVSPEKQIFHCFGC). Residues 262 to 342 (QEALLVEGFA…RVKVASLPNG (81 aa)) form the Toprim domain. Mg(2+) contacts are provided by glutamate 268, aspartate 311, and aspartate 313. The span at 429-447 (LSRSQRERTKPREAPDGET) shows a compositional bias: basic and acidic residues. The disordered stretch occupies residues 429–448 (LSRSQRERTKPREAPDGETA).

Belongs to the DnaG primase family. In terms of assembly, monomer. Interacts with replicative helicase DnaB, as DnaB(6):DnaG(3). A stable complex DnaI(6):DnaB(6):DnaG(3) fragment can be isolated; DnaI and DnaG do not contact each other (DnaI in this complex is derived from B.subtilis). It depends on Zn(2+) as a cofactor. The cofactor is Mg(2+).

It catalyses the reaction ssDNA + n NTP = ssDNA/pppN(pN)n-1 hybrid + (n-1) diphosphate.. RNA polymerase that catalyzes the synthesis of short RNA molecules used as primers for DNA polymerase during DNA replication. The sequence is that of DNA primase from Geobacillus stearothermophilus (Bacillus stearothermophilus).